The primary structure comprises 137 residues: Fluoride-specific ion channel FluC 1 (137 aa).

A run of 4 helical transmembrane segments spans residues 4-24 (LIYIIVGIAGILGALSRYYLG), 37-57 (LATLLINLAGCFLLAWLTTYI), 67-87 (VITGIGTGFIGSFTTFSTLSV), and 98-118 (WGIAFLYVSCSILGGLIMSGL). Residues Gly-77 and Thr-80 each coordinate Na(+).

The protein belongs to the fluoride channel Fluc/FEX (TC 1.A.43) family.

The protein localises to the cell membrane. The enzyme catalyses fluoride(in) = fluoride(out). With respect to regulation, na(+) is not transported, but it plays an essential structural role and its presence is essential for fluoride channel function. Fluoride-specific ion channel. Important for reducing fluoride concentration in the cell, thus reducing its toxicity. The polypeptide is Fluoride-specific ion channel FluC 1 (Bacillus anthracis).